Here is a 397-residue protein sequence, read N- to C-terminus: Cathepsin E-A (397 aa).

The first 16 residues, 1-16 (MRQILVLLLFATLVYG), serve as a signal peptide directing secretion. Positions 17-52 (LIRVPLKRQKSIRKTLKEKGKLSHIWTQQGIDMVQY) are cleaved as a propeptide — activation peptide. The region spanning 74 to 385 (YFGEISVGTP…DRGNNRVGLA (312 aa)) is the Peptidase A1 domain. Residue Asn-86 is glycosylated (N-linked (GlcNAc...) asparagine). Asp-92 is an active-site residue. Cys-105 and Cys-110 form a disulfide bridge. Residue Asn-130 is glycosylated (N-linked (GlcNAc...) asparagine). Cys-268 and Cys-272 are disulfide-bonded. Asp-277 is a catalytic residue. Cys-310 and Cys-344 form a disulfide bridge.

The protein belongs to the peptidase A1 family. Homodimer; disulfide-linked. Post-translationally, glycosylated. Contains high mannose-type oligosaccharide. As to expression, expressed predominantly in the larval foregut and the anterior and posterior adult stomach.

Its subcellular location is the endosome. The catalysed reaction is Similar to cathepsin D, but slightly broader specificity.. Functionally, may have a role in immune function. Probably involved in the processing of antigenic peptides during MHC class II-mediated antigen presentation. The protein is Cathepsin E-A (ctse-a) of Xenopus laevis (African clawed frog).